The chain runs to 660 residues: Bifunctional polymyxin resistance protein ArnA (660 aa).

The formyltransferase ArnAFT stretch occupies residues 1 to 304; the sequence is MKTVVFAYHD…TLGLVQGSRL (304 aa). Residue 86 to 88 participates in (6R)-10-formyltetrahydrofolate binding; the sequence is HLI. Residue His-104 is the Proton donor; for formyltransferase activity of the active site. (6R)-10-formyltetrahydrofolate contacts are provided by residues Arg-114 and 136–140; that span reads VKRAD. The tract at residues 314 to 660 is dehydrogenase ArnADH; that stretch reads RRTRVLILGV…RTVDLTDKPS (347 aa). NAD(+) contacts are provided by residues Asp-347 and 368–369; that span reads DI. Residues Ala-393, Tyr-398, and 432-433 contribute to the UDP-alpha-D-glucuronate site; that span reads TS. Residue Glu-434 is the Proton acceptor; for decarboxylase activity of the active site. UDP-alpha-D-glucuronate is bound by residues Arg-460, Asn-492, 526 to 535, and Tyr-613; that span reads KLIDGGKQKR. Arg-619 serves as the catalytic Proton donor; for decarboxylase activity.

The protein in the N-terminal section; belongs to the Fmt family. UDP-L-Ara4N formyltransferase subfamily. It in the C-terminal section; belongs to the NAD(P)-dependent epimerase/dehydratase family. UDP-glucuronic acid decarboxylase subfamily. As to quaternary structure, homohexamer, formed by a dimer of trimers.

The catalysed reaction is UDP-alpha-D-glucuronate + NAD(+) = UDP-beta-L-threo-pentopyranos-4-ulose + CO2 + NADH. It catalyses the reaction UDP-4-amino-4-deoxy-beta-L-arabinose + (6R)-10-formyltetrahydrofolate = UDP-4-deoxy-4-formamido-beta-L-arabinose + (6S)-5,6,7,8-tetrahydrofolate + H(+). It participates in nucleotide-sugar biosynthesis; UDP-4-deoxy-4-formamido-beta-L-arabinose biosynthesis; UDP-4-deoxy-4-formamido-beta-L-arabinose from UDP-alpha-D-glucuronate: step 1/3. The protein operates within nucleotide-sugar biosynthesis; UDP-4-deoxy-4-formamido-beta-L-arabinose biosynthesis; UDP-4-deoxy-4-formamido-beta-L-arabinose from UDP-alpha-D-glucuronate: step 3/3. Its pathway is bacterial outer membrane biogenesis; lipopolysaccharide biosynthesis. Functionally, bifunctional enzyme that catalyzes the oxidative decarboxylation of UDP-glucuronic acid (UDP-GlcUA) to UDP-4-keto-arabinose (UDP-Ara4O) and the addition of a formyl group to UDP-4-amino-4-deoxy-L-arabinose (UDP-L-Ara4N) to form UDP-L-4-formamido-arabinose (UDP-L-Ara4FN). The modified arabinose is attached to lipid A and is required for resistance to polymyxin and cationic antimicrobial peptides. The polypeptide is Bifunctional polymyxin resistance protein ArnA (Escherichia coli O157:H7).